A 1096-amino-acid polypeptide reads, in one-letter code: Phospholipase D zeta 1 (1096 aa).

Position 2 is an N-acetylalanine (Ala2). The PX domain occupies 50 to 204 (PKAVIVSVSR…REVCRFLEVS (155 aa)). The segment at 131 to 152 (VQDEDADEVPLHQDESAKNRDV) is disordered. Basic and acidic residues predominate over residues 139 to 151 (VPLHQDESAKNRD). The PH domain occupies 234–342 (DDSNRCCGCC…WVASINDAAL (109 aa)). The 28-residue stretch at 477-504 (YLWSHHEKLVIVDNQVCFIGGLDLCFGR) folds into the PLD phosphodiesterase 1 domain. Active-site residues include His482, Lys484, and Asp489. Basic and acidic residues predominate over residues 607–632 (GRQEESDIESKKEEDSIRGIRRDDSF). The tract at residues 607 to 691 (GRQEESDIES…DGDTPMRGFV (85 aa)) is disordered. The PLD phosphodiesterase 2 domain occupies 892–919 (SQVYVHSKIMIVDDRAALIGSANINDRS). Residues His897, Lys899, and Asp904 contribute to the active site.

Belongs to the phospholipase D family. PXPH-PLD subfamily. Requires Does not require Ca(2+) or any other cation for activity. as cofactor. In terms of tissue distribution, expressed in inflorescences, flowers, siliques, stems, leaves, and roots. Highest expression in roots.

It localises to the cytoplasmic vesicle. The enzyme catalyses a 1,2-diacyl-sn-glycero-3-phosphocholine + H2O = a 1,2-diacyl-sn-glycero-3-phosphate + choline + H(+). Calcium-independent and PIP2-dependent. Its function is as follows. Hydrolyzes glycerol-phospholipids at the terminal phosphodiesteric bond to generate phosphatidic acids (PA). Phosphatidylcholine-selective. Regulates root-hair morphogenesis. Contributes to the supply of inorganic phosphorus for cell metabolism and diacylglycerol moieties for galactolipid synthesis in phosphorus-starved roots. Involved in root elongation during phosphate limitation. The chain is Phospholipase D zeta 1 from Arabidopsis thaliana (Mouse-ear cress).